Here is an 892-residue protein sequence, read N- to C-terminus: Alanine--tRNA ligase (892 aa).

Zn(2+) contacts are provided by His574, His578, Cys676, and His680.

The protein belongs to the class-II aminoacyl-tRNA synthetase family. Zn(2+) serves as cofactor.

The protein localises to the cytoplasm. The enzyme catalyses tRNA(Ala) + L-alanine + ATP = L-alanyl-tRNA(Ala) + AMP + diphosphate. Catalyzes the attachment of alanine to tRNA(Ala) in a two-step reaction: alanine is first activated by ATP to form Ala-AMP and then transferred to the acceptor end of tRNA(Ala). Also edits incorrectly charged Ser-tRNA(Ala) and Gly-tRNA(Ala) via its editing domain. The chain is Alanine--tRNA ligase from Prochlorococcus marinus (strain MIT 9313).